We begin with the raw amino-acid sequence, 806 residues long: MSKLTTGSFSIEDLESVQITINNIVGAAKEAAEEKAKELEKAGPTLFPGLESYRDDWNFKLLDRYEPVITPMCDQCCYCTYGPCDLSGNKRGACGIDMLGHNGREFFLRVITGTACHAAHGRHLLDHLIETFGEDLPLNLGQSNVLTPNITISTGLSPKNLGEIKPAMEFVEEQLTQLLATVHAGQESAEIDYDSKALFSGSLDHVGMEISDVVQVAAYDFPKADPEAPLIEIGMGTIDKSKPFLCVIGHNVGGVTYMMDYMEEHDLTDKMEIAGLCCTAIDLSRYKEADRRPPYAKVIGSMSKELKVIRSGMPDVIVVDEQCVRGDIVPEAQKLKIPVIASNAKIMYGLPNRTDANVDDVVEELKSGAIPGCVMLDYDKLGELCIRLTMEMGPIRDAEGITAIPTDEEFADWVAKCADCGACMIACPEELDIPEAMGFAKEGDFSYLEELHDQCIGCRRCEQVCKKEIPILNIIEKVAQKQIAEEKGWMRAGRGQVSDAEIRAEGLNLVMGTTPGIIAIIGCPNYAEGTKDVYYIAEEFLKRNFIVVTTGCGAMDIGMFKDEDGKTLYERFPGGFECGGLVNIGSCVSNAHITGAAEKVAAIFAQRTLEGNLAEISDYILNRVGACGLAWGAFSQKASSIGTGCNILGIPAVLGPHSSKYRRALIAKTYEEDKWKVYDARNGQEMPIPPAPEFLLTTAETWQEAIPMMAKACIRPSDNSMGRSIKLTHWMELHKKYLGKDPEDWWKFVRNEADLPLAKREALLKELESKHGWEIDWKKKKIISGPKIKFDVSAQPTNLKRLCKEA.

Cys73, Cys76, Cys77, Cys79, Cys84, and Cys94 together coordinate [4Fe-4S] cluster. Residue His117 coordinates CO. 3 residues coordinate [Ni-4Fe-4S] cluster: His250, Cys278, and Cys323. 4Fe-4S ferredoxin-type domains lie at 407-436 (DEEF…IPEA) and 446-475 (SYLE…LNII). Positions 417, 420, 423, 427, 455, 458, 461, and 465 each coordinate [4Fe-4S] cluster. Residues Cys523, Cys552, and Cys587 each coordinate [Ni-4Fe-4S] cluster.

It belongs to the Ni-containing carbon monoxide dehydrogenase family. In terms of assembly, heterotetramer of two alpha and two epsilon subunits. The ACDS complex is made up of alpha, epsilon, beta, gamma and delta subunits with a probable stoichiometry of (alpha(2)epsilon(2))(4)-beta(8)-(gamma(1)delta(1))(8). The cofactor is [4Fe-4S] cluster. It depends on [Ni-4Fe-4S] cluster as a cofactor.

The catalysed reaction is CO + 2 oxidized [2Fe-2S]-[ferredoxin] + H2O = 2 reduced [2Fe-2S]-[ferredoxin] + CO2 + 2 H(+). Its pathway is one-carbon metabolism; methanogenesis from acetate. Functionally, part of the ACDS complex that catalyzes the reversible cleavage of acetyl-CoA, allowing growth on acetate as sole source of carbon and energy. The alpha-epsilon subcomponent functions as a carbon monoxide dehydrogenase. The protein is Acetyl-CoA decarbonylase/synthase complex subunit alpha 1 of Methanosarcina acetivorans (strain ATCC 35395 / DSM 2834 / JCM 12185 / C2A).